The chain runs to 523 residues: NAD(P)H-quinone oxidoreductase subunit 2 (523 aa).

14 helical membrane-spanning segments follow: residues 29-49 (AIAP…VDLA), 57-77 (WVPP…AQQW), 94-114 (LAIA…LISW), 123-143 (PIGE…LLCG), 147-167 (LVSV…LAGY), 182-202 (LLVG…LYGL), 221-243 (PLAA…AVPF), 255-275 (PTPV…ALAL), 291-311 (LLFT…ALAQ), 317-337 (MLAY…VCGT), 345-365 (VLYM…IILF), 389-409 (LGLS…GFFG), 424-444 (LLVV…ISVI), and 477-497 (IALV…NPLF).

The protein belongs to the complex I subunit 2 family. NDH-1 can be composed of about 15 different subunits; different subcomplexes with different compositions have been identified which probably have different functions.

The protein localises to the cellular thylakoid membrane. The catalysed reaction is a plastoquinone + NADH + (n+1) H(+)(in) = a plastoquinol + NAD(+) + n H(+)(out). It carries out the reaction a plastoquinone + NADPH + (n+1) H(+)(in) = a plastoquinol + NADP(+) + n H(+)(out). NDH-1 shuttles electrons from an unknown electron donor, via FMN and iron-sulfur (Fe-S) centers, to quinones in the respiratory and/or the photosynthetic chain. The immediate electron acceptor for the enzyme in this species is believed to be plastoquinone. Couples the redox reaction to proton translocation, and thus conserves the redox energy in a proton gradient. Cyanobacterial NDH-1 also plays a role in inorganic carbon-concentration. The protein is NAD(P)H-quinone oxidoreductase subunit 2 of Prochlorococcus marinus (strain MIT 9303).